A 774-amino-acid polypeptide reads, in one-letter code: Lysyl oxidase homolog 2 (774 aa).

The N-terminal stretch at 1 to 25 (MERRGSSCLCRCLALLALLPTLSLA) is a signal peptide. SRCR domains lie at 58-159 (LRLA…VVCS), 188-302 (IRAI…VSCV), 326-425 (VRLR…VRCN), and 435-544 (LRLN…VACS). 9 cysteine pairs are disulfide-bonded: C84–C148, C97–C158, C128–C138, C218–C291, C231–C301, C265–C275, C351–C414, C364–C424, and C395–C405. N-linked (GlcNAc...) asparagine glycosylation is present at N288. A glycan (N-linked (GlcNAc...) asparagine) is linked at N455. 3 cysteine pairs are disulfide-bonded: C464–C530, C477–C543, and C511–C521. The segment at 548–751 (PDLVLNAEIV…WMYNCHIGGS (204 aa)) is lysyl-oxidase like. Residues D549 and L550 each contribute to the Ca(2+) site. Intrachain disulfides connect C573–C625, C579–C695, C657–C673, and C663–C685. Positions 626, 628, and 630 each coordinate Cu cation. Residue N644 is glycosylated (N-linked (GlcNAc...) asparagine). Positions 653–689 (KASFCLEDTECEGDIQKSYECANFGEQGITMGCWDMY) form a cross-link, lysine tyrosylquinone (Lys-Tyr). Y689 bears the 2',4',5'-topaquinone mark. Positions 722, 724, 727, and 728 each coordinate Ca(2+). The cysteines at positions 732 and 746 are disulfide-linked.

It belongs to the lysyl oxidase family. In terms of assembly, component of some chromatin repressor complex. Interacts with SNAI1. Interacts with TAF10. Interacts with HSPA5. Interacts with EFEMP2. It depends on Cu cation as a cofactor. The cofactor is lysine tyrosylquinone residue. Post-translationally, the lysine tyrosylquinone cross-link (LTQ) is generated by condensation of the epsilon-amino group of a lysine with a topaquinone produced by oxidation of tyrosine. N-glycosylated. N-glycosylation on Asn-455 and Asn-644 may be essential for proper folding and secretion; may be composed of a fucosylated carbohydrates attached to a trimannose N-linked glycan core.

It is found in the secreted. The protein resides in the extracellular space. Its subcellular location is the extracellular matrix. The protein localises to the basement membrane. It localises to the nucleus. It is found in the chromosome. The protein resides in the endoplasmic reticulum. The enzyme catalyses L-lysyl-[protein] + O2 + H2O = (S)-2-amino-6-oxohexanoyl-[protein] + H2O2 + NH4(+). With respect to regulation, specifically inhibited by a mouse monoclonal antibody AB0023, inhibition occurs in a non-competitive manner. Its function is as follows. Mediates the post-translational oxidative deamination of lysine residues on target proteins leading to the formation of deaminated lysine (allysine). Acts as a transcription corepressor and specifically mediates deamination of trimethylated 'Lys-4' of histone H3 (H3K4me3), a specific tag for epigenetic transcriptional activation. Shows no activity against histone H3 when it is trimethylated on 'Lys-9' (H3K9me3) or 'Lys-27' (H3K27me3) or when 'Lys-4' is monomethylated (H3K4me1) or dimethylated (H3K4me2). Also mediates deamination of methylated TAF10, a member of the transcription factor IID (TFIID) complex, which induces release of TAF10 from promoters, leading to inhibition of TFIID-dependent transcription. LOXL2-mediated deamination of TAF10 results in transcriptional repression of genes required for embryonic stem cell pluripotency including POU5F1/OCT4, NANOG, KLF4 and SOX2. Involved in epithelial to mesenchymal transition (EMT) via interaction with SNAI1 and participates in repression of E-cadherin CDH1, probably by mediating deamination of histone H3. During EMT, involved with SNAI1 in negatively regulating pericentromeric heterochromatin transcription. SNAI1 recruits LOXL2 to pericentromeric regions to oxidize histone H3 and repress transcription which leads to release of heterochromatin component CBX5/HP1A, enabling chromatin reorganization and acquisition of mesenchymal traits. Interacts with the endoplasmic reticulum protein HSPA5 which activates the IRE1-XBP1 pathway of the unfolded protein response, leading to expression of several transcription factors involved in EMT and subsequent EMT induction. When secreted into the extracellular matrix, promotes cross-linking of extracellular matrix proteins by mediating oxidative deamination of peptidyl lysine residues in precursors to fibrous collagen and elastin. Acts as a regulator of sprouting angiogenesis, probably via collagen IV scaffolding. Acts as a regulator of chondrocyte differentiation, probably by regulating expression of factors that control chondrocyte differentiation. The sequence is that of Lysyl oxidase homolog 2 (LOXL2) from Bos taurus (Bovine).